Consider the following 321-residue polypeptide: o-succinylbenzoate synthase (321 aa).

The Proton donor role is filled by Lys-134. Mg(2+)-binding residues include Asp-162, Glu-191, and Asp-214. Lys-236 acts as the Proton acceptor in catalysis.

The protein belongs to the mandelate racemase/muconate lactonizing enzyme family. MenC type 1 subfamily. A divalent metal cation is required as a cofactor.

It catalyses the reaction (1R,6R)-6-hydroxy-2-succinyl-cyclohexa-2,4-diene-1-carboxylate = 2-succinylbenzoate + H2O. Its pathway is quinol/quinone metabolism; 1,4-dihydroxy-2-naphthoate biosynthesis; 1,4-dihydroxy-2-naphthoate from chorismate: step 4/7. It functions in the pathway quinol/quinone metabolism; menaquinone biosynthesis. Its function is as follows. Converts 2-succinyl-6-hydroxy-2,4-cyclohexadiene-1-carboxylate (SHCHC) to 2-succinylbenzoate (OSB). In Klebsiella pneumoniae (strain 342), this protein is o-succinylbenzoate synthase.